Here is a 283-residue protein sequence, read N- to C-terminus: Homeobox protein Hox-C12b (283 aa).

The homeobox DNA-binding region spans 215-274 (TRKKRKPYSKLQLNELEGEFILNEFITRQRRRELSDRLNLTDQQVKIWFQNRRMKKKRLL).

Belongs to the Abd-B homeobox family.

Its subcellular location is the nucleus. Functionally, sequence-specific transcription factor which is part of a developmental regulatory system that provides cells with specific positional identities on the anterior-posterior axis. The chain is Homeobox protein Hox-C12b (hoxc12b) from Danio rerio (Zebrafish).